A 282-amino-acid polypeptide reads, in one-letter code: Putative phosphoenolpyruvate synthase regulatory protein (282 aa).

An ADP-binding site is contributed by 161 to 168 (GVSRSGKT).

The protein belongs to the pyruvate, phosphate/water dikinase regulatory protein family. PSRP subfamily.

It catalyses the reaction [pyruvate, water dikinase] + ADP = [pyruvate, water dikinase]-phosphate + AMP + H(+). The enzyme catalyses [pyruvate, water dikinase]-phosphate + phosphate + H(+) = [pyruvate, water dikinase] + diphosphate. Bifunctional serine/threonine kinase and phosphorylase involved in the regulation of the phosphoenolpyruvate synthase (PEPS) by catalyzing its phosphorylation/dephosphorylation. The chain is Putative phosphoenolpyruvate synthase regulatory protein from Janthinobacterium sp. (strain Marseille) (Minibacterium massiliensis).